The sequence spans 195 residues: E3 ubiquitin-protein ligase ZNRF1 (195 aa).

Polar residues predominate over residues 1-10; sequence MGGKQSSASR. Disordered stretches follow at residues 1 to 36 and 61 to 84; these read MGGK…HFRA and PFGL…DSRG. Gly-2 is lipidated: N-myristoyl glycine. The segment covering 18–29 has biased composition (low complexity); the sequence is VSSDDSAVPPSS. The RING-type; atypical zinc-finger motif lies at 152-193; sequence CVICLEELSQGDTIARLPCLCIYHKSCIDSWFEVNRCCPEHP.

It localises to the endosome. The protein resides in the lysosome. The protein localises to the membrane. It catalyses the reaction S-ubiquitinyl-[E2 ubiquitin-conjugating enzyme]-L-cysteine + [acceptor protein]-L-lysine = [E2 ubiquitin-conjugating enzyme]-L-cysteine + N(6)-ubiquitinyl-[acceptor protein]-L-lysine.. It functions in the pathway protein modification; protein ubiquitination. Its function is as follows. E3 ubiquitin-protein ligase that plays a role in neuron cells differentiation. Plays a role in the establishment and maintenance of neuronal transmission and plasticity. This is E3 ubiquitin-protein ligase ZNRF1 (znrf1) from Xenopus tropicalis (Western clawed frog).